We begin with the raw amino-acid sequence, 245 residues long: tRNA pseudouridine synthase A (245 aa).

The active-site Nucleophile is the Asp52. Tyr111 contributes to the substrate binding site.

The protein belongs to the tRNA pseudouridine synthase TruA family. Homodimer.

It catalyses the reaction uridine(38/39/40) in tRNA = pseudouridine(38/39/40) in tRNA. In terms of biological role, formation of pseudouridine at positions 38, 39 and 40 in the anticodon stem and loop of transfer RNAs. This chain is tRNA pseudouridine synthase A, found in Afipia carboxidovorans (strain ATCC 49405 / DSM 1227 / KCTC 32145 / OM5) (Oligotropha carboxidovorans).